A 646-amino-acid polypeptide reads, in one-letter code: NADP-dependent malic enzyme 4, chloroplastic (646 aa).

Residues 1 to 74 (MISLTPSLFL…LETSAADIVP (74 aa)) constitute a chloroplast transit peptide. The Proton donor role is filled by Tyr194. Residue Arg247 participates in NADP(+) binding. The Proton acceptor role is filled by Lys265. A divalent metal cation is bound by residues Glu337, Asp338, and Asp361. NADP(+)-binding positions include Asp361, 390–406 (LFLG…ELIA), and Asn502.

The protein belongs to the malic enzymes family. Homodimer and homotetramer. Mg(2+) serves as cofactor. The cofactor is Mn(2+). In terms of tissue distribution, expressed in leaves, stems, flowers and roots, mainly in vascular system. In roots, present in the stele, including the vascular tissue and the pericycle, mainly at emerging lateral roots and at root tips.

The protein localises to the plastid. It is found in the chloroplast. The enzyme catalyses (S)-malate + NADP(+) = pyruvate + CO2 + NADPH. It catalyses the reaction oxaloacetate + H(+) = pyruvate + CO2. The protein operates within photosynthesis; C3 acid pathway. In terms of biological role, the chloroplastic ME isoform decarboxylates malate shuttled from neighboring mesophyll cells. The CO(2) released is then refixed by ribulose-bisphosphate carboxylase. This pathway eliminates the photorespiratory loss of CO(2) that occurs in most plants. This chain is NADP-dependent malic enzyme 4, chloroplastic (NADP-ME4), found in Arabidopsis thaliana (Mouse-ear cress).